Reading from the N-terminus, the 190-residue chain is MNNNLPTGSIAAAVDLLNKENVIAYPTEAVFGVGCDPDSETAVTRLLALKQRPVDKGLILIAASFEQLKPYIDDSILTAAQRKAVFDCWPGPVTFVFPAPATTPRWLTGRFDSLAVRVTNHPLVVALCNAYGKPLVSTSANLSGLPPCRTVEEVRAQFGDDFPVVEGATGGRLNPSEIRDALTGELFRQG.

One can recognise a YrdC-like domain in the interval 7–190; it reads TGSIAAAVDL…ALTGELFRQG (184 aa).

Belongs to the SUA5 family. TsaC subfamily.

It is found in the cytoplasm. It catalyses the reaction L-threonine + hydrogencarbonate + ATP = L-threonylcarbamoyladenylate + diphosphate + H2O. Required for the formation of a threonylcarbamoyl group on adenosine at position 37 (t(6)A37) in tRNAs that read codons beginning with adenine. Catalyzes the conversion of L-threonine, HCO(3)(-)/CO(2) and ATP to give threonylcarbamoyl-AMP (TC-AMP) as the acyladenylate intermediate, with the release of diphosphate. The sequence is that of Threonylcarbamoyl-AMP synthase from Salmonella choleraesuis (strain SC-B67).